A 511-amino-acid polypeptide reads, in one-letter code: Maturase K (511 aa).

This sequence belongs to the intron maturase 2 family. MatK subfamily.

It localises to the plastid. It is found in the chloroplast. Its function is as follows. Usually encoded in the trnK tRNA gene intron. Probably assists in splicing its own and other chloroplast group II introns. The chain is Maturase K from Bromus inermis (Smooth brome grass).